Here is a 519-residue protein sequence, read N- to C-terminus: Pleckstrin homology domain-containing family A member 8 (519 aa).

The region spanning 1–93 (MEGVLYKWTN…WLVALGSAKA (93 aa)) is the PH domain. Threonine 139 is modified (phosphothreonine). At serine 145 the chain carries Phosphoserine. At threonine 153 the chain carries Phosphothreonine. The segment at 310–519 (TFFSTMNTSF…VHGLESDEVV (210 aa)) is glycolipid transfer protein homology domain.

Homodimer. Interacts with ARF1; the interaction together with phosphatidylinositol 4-phosphate binding is required for FAPP2 GlcCer transfer ability. In terms of tissue distribution, expressed in kidney cell lines.

The protein resides in the golgi apparatus. Its subcellular location is the trans-Golgi network membrane. It localises to the membrane. Functionally, cargo transport protein that is required for apical transport from the Golgi complex. Transports AQP2 from the trans-Golgi network (TGN) to sites of AQP2 phosphorylation. Mediates the non-vesicular transport of glucosylceramide (GlcCer) from the trans-Golgi network (TGN) to the plasma membrane and plays a pivotal role in the synthesis of complex glycosphingolipids. Binding of both phosphatidylinositol 4-phosphate (PIP) and ARF1 are essential for the GlcCer transfer ability. Also required for primary cilium formation, possibly by being involved in the transport of raft lipids to the apical membrane, and for membrane tubulation. This is Pleckstrin homology domain-containing family A member 8 (PLEKHA8) from Homo sapiens (Human).